Here is a 1092-residue protein sequence, read N- to C-terminus: Isoleucine--tRNA ligase (1092 aa).

The 'HIGH' region motif lies at 53–63 (PFANGLPHYGH). The 'KMSKS' region signature appears at 613–617 (KLSKR). Lysine 616 is an ATP binding site.

This sequence belongs to the class-I aminoacyl-tRNA synthetase family. IleS type 2 subfamily. In terms of assembly, monomer. Requires Zn(2+) as cofactor.

The protein localises to the cytoplasm. It carries out the reaction tRNA(Ile) + L-isoleucine + ATP = L-isoleucyl-tRNA(Ile) + AMP + diphosphate. In terms of biological role, catalyzes the attachment of isoleucine to tRNA(Ile). As IleRS can inadvertently accommodate and process structurally similar amino acids such as valine, to avoid such errors it has two additional distinct tRNA(Ile)-dependent editing activities. One activity is designated as 'pretransfer' editing and involves the hydrolysis of activated Val-AMP. The other activity is designated 'posttransfer' editing and involves deacylation of mischarged Val-tRNA(Ile). The sequence is that of Isoleucine--tRNA ligase from Rickettsia conorii (strain ATCC VR-613 / Malish 7).